The following is a 120-amino-acid chain: Alpha-amylase inhibitor Haim-2 (120 aa).

The N-terminal stretch at 1–32 (MKRYVCSTFVACVMVLCVIPASGAAAHEAVAE) is a signal peptide. Cystine bridges form between Cys-43–Cys-59 and Cys-77–Cys-104.

Its function is as follows. Inhibits mammalian alpha-amylases specifically but has no action on plant and microbial alpha-amylases. This chain is Alpha-amylase inhibitor Haim-2, found in Streptomyces griseosporeus.